The following is a 357-amino-acid chain: Trans-enoyl reductase resD (357 aa).

Tyr-211 contacts NADP(+).

This sequence belongs to the zinc-containing alcohol dehydrogenase family.

It functions in the pathway antifungal biosynthesis. In terms of biological role, trans-enoyl reductase; part of the gene cluster that mediates the biosynthesis of the tetrahydropyranyl antifungal agent restricticin that acts as an inhibitor of CYP51 and blocks the ergosterol biosynthesis. The highly reducing polyketide synthase resH, the short chain dehydrogenase resG, the cyclase resF, the FAD-dependent monooxygenase resA and the enoylreductase resD are required to generate the first stable intermediate desmethylrestrictinol. ResH with resD biosynthesize the first polyketide chain intermediate that is reduced by resG, followed by epoxidation by resA before 6-endo cyclization via epoxide opening by resF leads to desmethylrestrictinol. The methyltransferase resE then catalyzes the C4 O-methylation of desmethylrestrictinol to produce restrictinol, and the nonribosomal peptide synthetase resC catalyzes the C3 esterification of restrictinol with glycine that leads to restricticin. In Aspergillus sclerotiorum, this protein is Trans-enoyl reductase resD.